Here is a 457-residue protein sequence, read N- to C-terminus: Argininosuccinate lyase (457 aa).

Belongs to the lyase 1 family. Argininosuccinate lyase subfamily.

It localises to the cytoplasm. The catalysed reaction is 2-(N(omega)-L-arginino)succinate = fumarate + L-arginine. Its pathway is amino-acid biosynthesis; L-arginine biosynthesis; L-arginine from L-ornithine and carbamoyl phosphate: step 3/3. This Serratia proteamaculans (strain 568) protein is Argininosuccinate lyase.